Consider the following 195-residue polypeptide: uncharacterized protein (195 aa).

A signal peptide spans 1 to 21 (MHFSSCVLVSALAIVTNVATA). Residues Asn-62 and Asn-109 are each glycosylated (N-linked (GlcNAc...) asparagine). The disordered stretch occupies residues 119–141 (DWDEDTVTGENAPDSGEPFSTSH).

Its subcellular location is the secreted. This is an uncharacterized protein from Arthroderma benhamiae (strain ATCC MYA-4681 / CBS 112371) (Trichophyton mentagrophytes).